An 883-amino-acid chain; its full sequence is Phosphoenolpyruvate carboxylase (883 aa).

Active-site residues include histidine 138 and lysine 546.

The protein belongs to the PEPCase type 1 family. It depends on Mg(2+) as a cofactor.

The enzyme catalyses oxaloacetate + phosphate = phosphoenolpyruvate + hydrogencarbonate. Its function is as follows. Forms oxaloacetate, a four-carbon dicarboxylic acid source for the tricarboxylic acid cycle. The chain is Phosphoenolpyruvate carboxylase from Salmonella choleraesuis (strain SC-B67).